A 142-amino-acid polypeptide reads, in one-letter code: Probable transport accessory protein MmpS1 (142 aa).

Transmembrane regions (helical) follow at residues 8 to 28 and 81 to 101; these read FWIPMVIVIVVAVAAVTVSRL and VVNAAVPWSFTIVTTLTAVVA.

The protein belongs to the MmpS family.

It localises to the cell membrane. This Mycobacterium bovis (strain ATCC BAA-935 / AF2122/97) protein is Probable transport accessory protein MmpS1 (mmpS1).